The following is a 278-amino-acid chain: NADPH-dependent 7-cyano-7-deazaguanine reductase (278 aa).

Residue 87 to 89 (IES) participates in substrate binding. Residue 89–90 (SK) participates in NADPH binding. Cys185 functions as the Thioimide intermediate in the catalytic mechanism. The Proton donor role is filled by Asp192. Residue 224–225 (HE) coordinates substrate. Position 253–254 (253–254 (RG)) interacts with NADPH. The interval 255-278 (GLDINPYRSTNPTFSVQNHRSFRQ) is disordered. Polar residues predominate over residues 261-278 (YRSTNPTFSVQNHRSFRQ).

It belongs to the GTP cyclohydrolase I family. QueF type 2 subfamily. In terms of assembly, homodimer.

It localises to the cytoplasm. It carries out the reaction 7-aminomethyl-7-carbaguanine + 2 NADP(+) = 7-cyano-7-deazaguanine + 2 NADPH + 3 H(+). It functions in the pathway tRNA modification; tRNA-queuosine biosynthesis. In terms of biological role, catalyzes the NADPH-dependent reduction of 7-cyano-7-deazaguanine (preQ0) to 7-aminomethyl-7-deazaguanine (preQ1). This chain is NADPH-dependent 7-cyano-7-deazaguanine reductase, found in Coxiella burnetii (strain CbuK_Q154) (Coxiella burnetii (strain Q154)).